The sequence spans 406 residues: Bifunctional enzyme IspD/IspF (406 aa).

The segment at 1-247 (MSLIRVNGEA…TLFFNPAKDT (247 aa)) is 2-C-methyl-D-erythritol 4-phosphate cytidylyltransferase. A 2-C-methyl-D-erythritol 2,4-cyclodiphosphate synthase region spans residues 248–406 (FIGMGFDTHA…HVSMRYKQKL (159 aa)). A divalent metal cation contacts are provided by Asp254 and His256. Residues 254 to 256 (DTH) and 280 to 281 (HS) contribute to the 4-CDP-2-C-methyl-D-erythritol 2-phosphate site. His288 is a binding site for a divalent metal cation. 4-CDP-2-C-methyl-D-erythritol 2-phosphate-binding positions include 302 to 304 (DIG), 307 to 311 (FPDND), 378 to 381 (TTME), Phe385, and Lys388.

In the N-terminal section; belongs to the IspD/TarI cytidylyltransferase family. IspD subfamily. It in the C-terminal section; belongs to the IspF family. A divalent metal cation serves as cofactor.

The enzyme catalyses 2-C-methyl-D-erythritol 4-phosphate + CTP + H(+) = 4-CDP-2-C-methyl-D-erythritol + diphosphate. It carries out the reaction 4-CDP-2-C-methyl-D-erythritol 2-phosphate = 2-C-methyl-D-erythritol 2,4-cyclic diphosphate + CMP. Its pathway is isoprenoid biosynthesis; isopentenyl diphosphate biosynthesis via DXP pathway; isopentenyl diphosphate from 1-deoxy-D-xylulose 5-phosphate: step 2/6. The protein operates within isoprenoid biosynthesis; isopentenyl diphosphate biosynthesis via DXP pathway; isopentenyl diphosphate from 1-deoxy-D-xylulose 5-phosphate: step 4/6. In terms of biological role, bifunctional enzyme that catalyzes the formation of 4-diphosphocytidyl-2-C-methyl-D-erythritol from CTP and 2-C-methyl-D-erythritol 4-phosphate (MEP) (IspD), and catalyzes the conversion of 4-diphosphocytidyl-2-C-methyl-D-erythritol 2-phosphate (CDP-ME2P) to 2-C-methyl-D-erythritol 2,4-cyclodiphosphate (ME-CPP) with a corresponding release of cytidine 5-monophosphate (CMP) (IspF). The sequence is that of Bifunctional enzyme IspD/IspF from Helicobacter pylori (strain ATCC 700392 / 26695) (Campylobacter pylori).